Reading from the N-terminus, the 176-residue chain is Small ribosomal subunit protein uS5 (176 aa).

One can recognise an S5 DRBM domain in the interval 14 to 77 (MQEKLIHINR…DQARRWMTSI (64 aa)).

This sequence belongs to the universal ribosomal protein uS5 family. Part of the 30S ribosomal subunit. Contacts proteins S4 and S8.

Its function is as follows. With S4 and S12 plays an important role in translational accuracy. Located at the back of the 30S subunit body where it stabilizes the conformation of the head with respect to the body. This chain is Small ribosomal subunit protein uS5, found in Acidithiobacillus ferrooxidans (strain ATCC 23270 / DSM 14882 / CIP 104768 / NCIMB 8455) (Ferrobacillus ferrooxidans (strain ATCC 23270)).